We begin with the raw amino-acid sequence, 351 residues long: Phosphate acyltransferase (351 aa).

It belongs to the PlsX family. In terms of assembly, homodimer. Probably interacts with PlsY.

Its subcellular location is the cytoplasm. The catalysed reaction is a fatty acyl-[ACP] + phosphate = an acyl phosphate + holo-[ACP]. Its pathway is lipid metabolism; phospholipid metabolism. In terms of biological role, catalyzes the reversible formation of acyl-phosphate (acyl-PO(4)) from acyl-[acyl-carrier-protein] (acyl-ACP). This enzyme utilizes acyl-ACP as fatty acyl donor, but not acyl-CoA. This Verminephrobacter eiseniae (strain EF01-2) protein is Phosphate acyltransferase.